An 80-amino-acid chain; its full sequence is Raniseptin-7 (80 aa).

The first 22 residues, 1–22 (MAFLKKSLFLVLFLGIVSLSIC), serve as a signal peptide directing secretion. A propeptide spanning residues 23–49 (EEEKREGEEEEKQEEENEELSEEELRE) is cleaved from the precursor. The interval 27–46 (REGEEEEKQEEENEELSEEE) is disordered. A compositionally biased stretch (acidic residues) spans 30–44 (EEEEKQEEENEELSE).

The protein belongs to the frog skin active peptide (FSAP) family. Dermaseptin subfamily. In terms of tissue distribution, expressed by the skin glands.

It localises to the secreted. In terms of biological role, has antibacterial activity. This Boana raniceps (Chaco tree frog) protein is Raniseptin-7.